A 197-amino-acid polypeptide reads, in one-letter code: Recombination protein RecR (197 aa).

Residues C57–C72 form a C4-type zinc finger. The Toprim domain maps to S79–P174.

It belongs to the RecR family.

Functionally, may play a role in DNA repair. It seems to be involved in an RecBC-independent recombinational process of DNA repair. It may act with RecF and RecO. This chain is Recombination protein RecR, found in Trichlorobacter lovleyi (strain ATCC BAA-1151 / DSM 17278 / SZ) (Geobacter lovleyi).